We begin with the raw amino-acid sequence, 653 residues long: Chromosomal replication initiator protein DnaA (653 aa).

The segment at 1–100 is domain I, interacts with DnaA modulators; that stretch reads MADVPADLAA…SAGEPPASAS (100 aa). The interval 86-310 is disordered; that stretch reads ITVDDSAGEP…PAPATGPGEP (225 aa). Positions 101–312 are domain II; sequence PAPPRYEEPE…PATGPGEPTA (212 aa). Composition is skewed to basic and acidic residues over residues 120 to 150 and 221 to 267; these read DPYE…DRHQ and PSYD…RRNI. A compositionally biased stretch (low complexity) spans 284–310; that stretch reads GSALPASSGAPGPLAAQPAPATGPGEP. The domain III, AAA+ region stretch occupies residues 313-529; that stretch reads RLNPKYLFDT…GALIRVTAFA (217 aa). Positions 357, 359, 360, and 361 each coordinate ATP. Residues 530-653 are domain IV, binds dsDNA; sequence SLNRQPVDLG…TELTNRIKNG (124 aa).

Belongs to the DnaA family. As to quaternary structure, oligomerizes as a right-handed, spiral filament on DNA at oriC.

The protein localises to the cytoplasm. In terms of biological role, plays an essential role in the initiation and regulation of chromosomal replication. ATP-DnaA binds to the origin of replication (oriC) to initiate formation of the DNA replication initiation complex once per cell cycle. Binds the DnaA box (a 9 base pair repeat at the origin) and separates the double-stranded (ds)DNA. Forms a right-handed helical filament on oriC DNA; dsDNA binds to the exterior of the filament while single-stranded (ss)DNA is stabiized in the filament's interior. The ATP-DnaA-oriC complex binds and stabilizes one strand of the AT-rich DNA unwinding element (DUE), permitting loading of DNA polymerase. After initiation quickly degrades to an ADP-DnaA complex that is not apt for DNA replication. Binds acidic phospholipids. This is Chromosomal replication initiator protein DnaA from Streptomyces avermitilis (strain ATCC 31267 / DSM 46492 / JCM 5070 / NBRC 14893 / NCIMB 12804 / NRRL 8165 / MA-4680).